The chain runs to 91 residues: DNA-binding protein HU (91 aa).

This sequence belongs to the bacterial histone-like protein family.

In terms of biological role, histone-like DNA-binding protein which is capable of wrapping DNA to stabilize it, and thus to prevent its denaturation under extreme environmental conditions. This chain is DNA-binding protein HU (hup), found in Clostridium pasteurianum.